A 231-amino-acid chain; its full sequence is Chalcone--flavanone isomerase (231 aa).

Residues threonine 46, asparagine 112, and serine 189 each contribute to the substrate site.

This sequence belongs to the chalcone isomerase family.

The enzyme catalyses a chalcone = a flavanone.. The protein operates within secondary metabolite biosynthesis; flavonoid biosynthesis. Functionally, catalyzes the intramolecular cyclization of bicyclic chalcones into tricyclic (S)-flavanones. Responsible for the isomerization of 4,2',4',6'-tetrahydroxychalcone (also termed chalcone) into naringenin. The chain is Chalcone--flavanone isomerase (CHI) from Hordeum vulgare (Barley).